Here is a 147-residue protein sequence, read N- to C-terminus: Large ribosomal subunit protein uL15 (147 aa).

The segment at 1–65 (MQLHELKPAP…PLQRRLPKRG (65 aa)) is disordered. 2 stretches are compositionally biased toward gly residues: residues 21-31 (QGIGSGLGKTA) and 42-52 (SGGGVRPGFEG).

The protein belongs to the universal ribosomal protein uL15 family. In terms of assembly, part of the 50S ribosomal subunit.

Binds to the 23S rRNA. In Heliobacterium modesticaldum (strain ATCC 51547 / Ice1), this protein is Large ribosomal subunit protein uL15.